Consider the following 225-residue polypeptide: Ribonuclease 3 (225 aa).

An RNase III domain is found at 7–129; that stretch reads IPRLCRTLGY…IIGAIYLDSE (123 aa). Glu42 is a Mg(2+) binding site. Asp46 is an active-site residue. Positions 115 and 118 each coordinate Mg(2+). Residue Glu118 is part of the active site. The 71-residue stretch at 155–225 folds into the DRBM domain; the sequence is DPKTLLQEHL…AAQVLELMKK (71 aa).

Belongs to the ribonuclease III family. As to quaternary structure, homodimer. Requires Mg(2+) as cofactor.

The protein localises to the cytoplasm. The enzyme catalyses Endonucleolytic cleavage to 5'-phosphomonoester.. Digests double-stranded RNA. Involved in the processing of primary rRNA transcript to yield the immediate precursors to the large and small rRNAs (23S and 16S). Processes some mRNAs, and tRNAs when they are encoded in the rRNA operon. Processes pre-crRNA and tracrRNA of type II CRISPR loci if present in the organism. The chain is Ribonuclease 3 from Shewanella halifaxensis (strain HAW-EB4).